A 475-amino-acid chain; its full sequence is ATP synthase subunit beta, chloroplastic (475 aa).

An ATP-binding site is contributed by 156–163; it reads GGAGVGKT.

Belongs to the ATPase alpha/beta chains family. As to quaternary structure, F-type ATPases have 2 components, CF(1) - the catalytic core - and CF(0) - the membrane proton channel. CF(1) has five subunits: alpha(3), beta(3), gamma(1), delta(1), epsilon(1). CF(0) has four main subunits: a(1), b(1), b'(1) and c(9-12).

Its subcellular location is the plastid. It localises to the chloroplast thylakoid membrane. It catalyses the reaction ATP + H2O + 4 H(+)(in) = ADP + phosphate + 5 H(+)(out). Its function is as follows. Produces ATP from ADP in the presence of a proton gradient across the membrane. The catalytic sites are hosted primarily by the beta subunits. This chain is ATP synthase subunit beta, chloroplastic, found in Phaeodactylum tricornutum (strain CCAP 1055/1).